We begin with the raw amino-acid sequence, 963 residues long: Ubiquitin carboxyl-terminal hydrolase 4 (963 aa).

The DUSP domain maps to 11 to 122 (PDAETQKSEL…GQQPIVRKVV (112 aa)). The segment at 27 to 216 (TLQRGAQWYL…LYLGQVLVIE (190 aa)) is necessary for interaction with SART3. Positions 133 to 141 (VEVYLLELK) match the Nuclear export signal motif. The Ubiquitin-like 1 domain occupies 142–226 (LCENSDPTNV…PQNEDGTWPR (85 aa)). Positions 220-255 (EDGTWPRQTLQSKSSTAPSRNFTTSPKSSASPYSSV) are disordered. Positions 225 to 243 (PRQTLQSKSSTAPSRNFTT) are enriched in polar residues. Residues 229-295 (LQSKSSTAPS…SYNCQEPPSS (67 aa)) form a required for USP4 activation by providing conformational flexibility between the DUSP and catalytic domains region. Low complexity predominate over residues 244–255 (SPKSSASPYSSV). The USP domain maps to 302-923 (CGLGNLGNTC…AAYVLFYQRR (622 aa)). Catalysis depends on C311, which acts as the Nucleophile. The tract at residues 384-386 (PQF) is regulates ubiquitin dissociation. Residues 405 to 407 (LHE) are necessary for interaction with RBL2. S445 carries the post-translational modification Phosphoserine. The segment at 459 to 463 (LVCPE) is necessary for interaction with RB1 and RBL2. Zn(2+) contacts are provided by C461 and C464. The Ubiquitin-like 2 domain maps to 483–571 (LKKDRVMEVF…IFVYEVCSTS (89 aa)). Positions 485–775 (KDRVMEVFLV…LQPQKKKKTT (291 aa)) are interacts with DUSP and ubiquitin-like 1 domains and is required for USP4 activation. The tract at residues 637–698 (DEFGSSPLEP…PSETTQKKIK (62 aa)) is disordered. S655 carries the post-translational modification Phosphoserine. A compositionally biased stretch (acidic residues) spans 657–666 (EGEDEEEMEH). Phosphoserine occurs at positions 675 and 680. The Nuclear localization signal motif lies at 767–772 (QPQKKK). Residues C799 and C802 each contribute to the Zn(2+) site. H881 acts as the Proton acceptor in catalysis. Residues 928–963 (YKTPSLSSSGSSDGGTRPSSSQQGLGDDEACSMDTN) are disordered. Residues 932 to 948 (SLSSSGSSDGGTRPSSS) show a composition bias toward low complexity. Residues 953 to 963 (GDDEACSMDTN) show a composition bias toward acidic residues.

The protein belongs to the peptidase C19 family. USP4 subfamily. Interacts with RB1 (both dephosphorylated and hypophosphorylated forms). Interacts with RBL1 and RBL2. Interacts with ADORA2A (via cytoplasmic C-terminus); the interaction is direct. Interacts with SART3; recruits USP4 to its substrate PRPF3. In terms of processing, phosphorylated at Ser-445 by PKB/AKT1 in response to EGF stimulus, promoting its ability deubiquitinate RHEB. Post-translationally, monoubiquitinated by TRIM21. Ubiquitination does not lead to its proteasomal degradation. Autodeubiquitinated.

It localises to the cytoplasm. The protein resides in the nucleus. It carries out the reaction Thiol-dependent hydrolysis of ester, thioester, amide, peptide and isopeptide bonds formed by the C-terminal Gly of ubiquitin (a 76-residue protein attached to proteins as an intracellular targeting signal).. The completion of the deubiquitinase reaction is mediated by the DUSP and ubiquitin-like 1 domains which promotes the release of ubiquitin from the catalytic site enabling subsequent reactions to occur. Its function is as follows. Deubiquitinating enzyme that removes conjugated ubiquitin from target proteins. Deubiquitinates PDPK1. Deubiquitinates TRIM21. Deubiquitinates receptor ADORA2A which increases the amount of functional receptor at the cell surface. Deubiquitinates HAS2. Deubiquitinates RHEB in response to EGF signaling, promoting mTORC1 signaling. May regulate mRNA splicing through deubiquitination of the U4 spliceosomal protein PRPF3. This may prevent its recognition by the U5 component PRPF8 thereby destabilizing interactions within the U4/U6.U5 snRNP. May also play a role in the regulation of quality control in the ER. This Pongo abelii (Sumatran orangutan) protein is Ubiquitin carboxyl-terminal hydrolase 4 (USP4).